The chain runs to 1447 residues: MAAQGEAVEEIICEFDDDLVSELSTLLRVDALSVLKRQQEEDHKTRMKMKKGFNSQMRSEAKRLKTFETYDKFRSWTPQEMAAAGFYHTGVKLGVQCFCCSLILFSTRLRKLPIENHKKLRPECEFLLGKDVGNIGKYDIRVKSPEKMLRGDKARYHEEEARLESFEDWPFYAHGTSPRVLSAAGFVFTGKRDTVQCFSCGGCLGNWEEGDDPWKEHAKWFPKCEFLQSKKSPEEITQYVQSYEGFLHVTGEHFVNSWVRRELPMVSAYCNDSVFANEELRMDTFKDWPHESPGAVEALVKAGLFYTGKRDIVQCFSCGGCMEKWAEGDNPIEDHTKFFPNCVFLQTLKSSAEVIPALQSHCALPEAMETTSESNHDDAAAVHSTVVDVSPSEAQELEPASSLVSVLCRDQDHSEAQGRGCASSGTYLPSTDLGQSEAQWLQEARSLSEQLRDTYTKATFRHMNLPEVYSSLGTDHLLSCDVSIISKHISQPVQGSLTIPEVFSNLNSVMCVEGEAGSGKTTFLKRIAFLWASGCCPLLYRFQLVFYLSLSSITPGQELAKIICAQLLGAGGCISEVCLSSIIQQLQHQVLFLLDDYSGLASLPQALHTLITKNYLSRTCLLIAVHTNKVRGIRPYLDTSLEIKEFPFYNTVSVLRKLFSHDIMRVRKFINYFGFHEELQGIHKTPLFVAAVCTDWFKNPSDQPFQDVALFKAYMQYLSLKHKGAAKPLQATVSSCGQLALTGLFSSCFEFNSDNLAEAGVDEDEELTTCLMSKFTAQRLRPVYRFLGPLFQEFLAAVRLTELLSSDRQEDQDLGLYYLRQINSPLKAMSIYHTFLKYVSSHPSSKAAPTVVSHLLQLVDEKESLENMSENEDYMKLHPEALLWIECLRGLWQLSPESFSLFISENLLRICLNFAHESNTVAACSPVILQFLRGRTLDLKVLSLQYFWDHPETLLLLKSIKISLNGNNWVQRIDFSLIEKSFEKVQPPTIDQDYAIAFQPINEVQKNLSEKKHIIKKYEDMKHQIPLNISTGYWKLSPKPYKIPKLEVQVTNTGPADQALLQVLMEVFSASQSIEFRLSDSSGFLESIRPALELSKASVTKCSMSRLELSREDQKLLLTLPTLQSLEVSETNQLPDQLFHNLHKFLGLKELCVRLDSKPDVLSVLPGEFPNLHHMEKLSIRTSTESDLSKLVKLIQNSPNLHVFHLKCNFLSNCEPLMTVLASCKKLREIEFSGRCFEAMTFVNILPNFVFLKILNLRDQQFPDKETSEKFAQALGSLRNLEKLFVPTGDGIHQVAKLIVRQCLQLPCLRVLVFAETLDDDSVLEIAKGATRGGFQKLENLDLTLNHKITEEGYRNFFQVLDNLPNLKNLDISRHIPECIQIQAITVKALGQCVSRLPSLTRLGMLSWLLDEEDIKVINDVKERHPQSKRLTVHWRWVVPFSPVIQK.

3 BIR repeats span residues 60 to 127 (EAKR…CEFL), 159 to 227 (EEAR…CEFL), and 278 to 345 (EELR…CVFL). The Zn(2+) site is built by C315, C318, H335, and C342. The region spanning 508–802 (SVMCVEGEAG…EFLAAVRLTE (295 aa)) is the NACHT domain. K520 provides a ligand contact to ATP.

Component of the NLRC4 inflammasome, at least composed of NLRC4, caspase-1 (CASP1) and some NAIP protein. Interacts with S.typhimurium (Salmonella) PrgJ and B.thailandensis BsaK.

In terms of biological role, sensor component of the NLRC4 inflammasome that specifically recognizes and binds type III secretion system (T3SS) rod proteins such as S.typhimurium (Salmonella) PrgJ and B.thailandensis BsaK from pathogenic bacteria. Association of pathogenic bacteria proteins drives in turn drive assembly and activation of the NLRC4 inflammasome, promoting caspase-1 activation, cytokine production and macrophage pyroptosis. The NLRC4 inflammasome is activated as part of the innate immune response to a range of intracellular bacteria. The NLRC4 inflammasome senses Gram-negative bacteria such as L.pneumophila and P.aeruginosa, enteric pathogens S.typhimurium (Salmonella) and S.flexneri. Prevents motor-neuron apoptosis induced by a variety of signals. The sequence is that of Baculoviral IAP repeat-containing protein 1b (Naip2) from Mus musculus (Mouse).